A 208-amino-acid chain; its full sequence is 3-demethoxyubiquinol 3-hydroxylase (208 aa).

Glu-57, Glu-87, His-90, Glu-139, Glu-171, and His-174 together coordinate Fe cation.

This sequence belongs to the COQ7 family. It depends on Fe cation as a cofactor.

The protein resides in the cell membrane. The catalysed reaction is a 5-methoxy-2-methyl-3-(all-trans-polyprenyl)benzene-1,4-diol + AH2 + O2 = a 3-demethylubiquinol + A + H2O. It participates in cofactor biosynthesis; ubiquinone biosynthesis. In terms of biological role, catalyzes the hydroxylation of 2-nonaprenyl-3-methyl-6-methoxy-1,4-benzoquinol during ubiquinone biosynthesis. The protein is 3-demethoxyubiquinol 3-hydroxylase of Nitrosospira multiformis (strain ATCC 25196 / NCIMB 11849 / C 71).